Consider the following 363-residue polypeptide: Peroxidase (363 aa).

Positions 1 to 20 (MKLSLLSTFAAVIIGALALP) are cleaved as a signal peptide. Position 21 is a pyrrolidone carboxylic acid (Gln-21). 4 disulfide bridges follow: Cys-31–Cys-43, Cys-42–Cys-312, Cys-62–Cys-148, and Cys-276–Cys-341. His-75 (proton acceptor) is an active-site residue. Residues Asp-76, Gly-94, Asp-96, and Ser-98 each contribute to the Ca(2+) site. Residue Asn-162 is glycosylated (N-linked (GlcNAc...) (high mannose) asparagine). Position 203 (His-203) interacts with heme b. Ser-204, Asp-221, Thr-223, Val-226, and Asp-228 together coordinate Ca(2+). O-linked (Man...) serine glycosylation is present at Ser-358.

The protein belongs to the peroxidase family. Ligninase subfamily. Ca(2+) is required as a cofactor. It depends on heme b as a cofactor.

It is found in the secreted. The catalysed reaction is 2 a phenolic donor + H2O2 = 2 a phenolic radical donor + 2 H2O. In Coprinopsis cinerea (strain Okayama-7 / 130 / ATCC MYA-4618 / FGSC 9003) (Inky cap fungus), this protein is Peroxidase (CIP1).